Here is a 204-residue protein sequence, read N- to C-terminus: Cardiotrophin-2 (204 aa).

A signal peptide spans 1 to 22; that stretch reads MYCLLATPLCLLSLLLPPLSPA. Residue N44 is glycosylated (N-linked (GlcNAc...) asparagine).

This sequence belongs to the IL-6 superfamily. Binds to tripartite CNTF receptor complex consisting of CNTF alpha chain, LIFR and IL6ST (in vitro). As to expression, not detected in adult tissues.

The protein localises to the secreted. Functionally, increases the platelet count associated with splenomegaly. May have an important role in neuronal precursor development and maturation. This chain is Cardiotrophin-2 (Ctf2), found in Mus musculus (Mouse).